We begin with the raw amino-acid sequence, 858 residues long: Bifunctional uridylyltransferase/uridylyl-removing enzyme (858 aa).

A uridylyltransferase region spans residues 1 to 324 (MSAHAAPSPE…PATSGITRVL (324 aa)). The uridylyl-removing stretch occupies residues 325–681 (SPDRFVEKQG…ARPSPIGDAL (357 aa)). Positions 443 to 565 (VDQHILMVLR…VGNERYLTAL (123 aa)) constitute an HD domain. 2 ACT domains span residues 682 to 761 (QVLV…PEPS) and 790 to 858 (ILSV…AIAV).

The protein belongs to the GlnD family. It depends on Mg(2+) as a cofactor.

It carries out the reaction [protein-PII]-L-tyrosine + UTP = [protein-PII]-uridylyl-L-tyrosine + diphosphate. It catalyses the reaction [protein-PII]-uridylyl-L-tyrosine + H2O = [protein-PII]-L-tyrosine + UMP + H(+). Uridylyltransferase (UTase) activity is inhibited by glutamine, while glutamine activates uridylyl-removing (UR) activity. Functionally, modifies, by uridylylation and deuridylylation, the PII regulatory proteins (GlnB and homologs), in response to the nitrogen status of the cell that GlnD senses through the glutamine level. Under low glutamine levels, catalyzes the conversion of the PII proteins and UTP to PII-UMP and PPi, while under higher glutamine levels, GlnD hydrolyzes PII-UMP to PII and UMP (deuridylylation). Thus, controls uridylylation state and activity of the PII proteins, and plays an important role in the regulation of nitrogen fixation and metabolism. This is Bifunctional uridylyltransferase/uridylyl-removing enzyme from Burkholderia lata (strain ATCC 17760 / DSM 23089 / LMG 22485 / NCIMB 9086 / R18194 / 383).